Reading from the N-terminus, the 156-residue chain is Cyanate hydratase (156 aa).

Catalysis depends on residues Arg-96, Glu-99, and Ser-122.

The protein belongs to the cyanase family.

The catalysed reaction is cyanate + hydrogencarbonate + 3 H(+) = NH4(+) + 2 CO2. Functionally, catalyzes the reaction of cyanate with bicarbonate to produce ammonia and carbon dioxide. This Burkholderia orbicola (strain MC0-3) protein is Cyanate hydratase.